A 164-amino-acid polypeptide reads, in one-letter code: Putative lung carcinoma-associated protein 10 (164 aa).

Positions methionine 1–glutamine 164 are disordered. The span at glycine 23 to glycine 40 shows a compositional bias: low complexity. Residues methionine 152–glutamine 164 show a composition bias toward polar residues.

The polypeptide is Putative lung carcinoma-associated protein 10 (LCA10) (Homo sapiens (Human)).